The primary structure comprises 585 residues: Phosphomethylpyrimidine synthase (585 aa).

Positions 89–107 are enriched in basic and acidic residues; the sequence is RGDTESYEGRHVKPEDNGY. A disordered region spans residues 89-116; the sequence is RGDTESYEGRHVKPEDNGYRSRNGSHQH. Substrate-binding positions include N199, M228, Y257, H293, 313–315, 354–357, and E393; these read SRG and DGLR. Position 397 (H397) interacts with Zn(2+). Y420 contacts substrate. A Zn(2+)-binding site is contributed by H461. C541, C544, and C549 together coordinate [4Fe-4S] cluster.

The protein belongs to the ThiC family. The cofactor is [4Fe-4S] cluster.

It carries out the reaction 5-amino-1-(5-phospho-beta-D-ribosyl)imidazole + S-adenosyl-L-methionine = 4-amino-2-methyl-5-(phosphooxymethyl)pyrimidine + CO + 5'-deoxyadenosine + formate + L-methionine + 3 H(+). Its pathway is cofactor biosynthesis; thiamine diphosphate biosynthesis. Its function is as follows. Catalyzes the synthesis of the hydroxymethylpyrimidine phosphate (HMP-P) moiety of thiamine from aminoimidazole ribotide (AIR) in a radical S-adenosyl-L-methionine (SAM)-dependent reaction. The polypeptide is Phosphomethylpyrimidine synthase (Bacillus pumilus (strain SAFR-032)).